Here is a 984-residue protein sequence, read N- to C-terminus: Ephrin type-B receptor 1 (984 aa).

Positions 1–17 are cleaved as a signal peptide; sequence MALDYLLLLLLASAVAA. Over 18 to 540 the chain is Extracellular; it reads MEETLMDTRT…YKSELREQLP (523 aa). Residues 19 to 201 form the Eph LBD domain; sequence EETLMDTRTA…FFKKCPSIVQ (183 aa). 2 Fibronectin type-III domains span residues 322-432 and 433-528; these read VPSG…TNQA and APST…TLTD. Asparagine 334, asparagine 426, and asparagine 480 each carry an N-linked (GlcNAc...) asparagine glycan. Residues 541-563 form a helical membrane-spanning segment; sequence LIAGSAAAGVVFVVSLVAISIVC. Over 564–984 the chain is Cytoplasmic; the sequence is SRKRAYSKEA…QISQSPTAMA (421 aa). A Phosphotyrosine modification is found at tyrosine 600. Residues 619–882 form the Protein kinase domain; it reads VKIEEVIGAG…EIVNTLDKMI (264 aa). ATP-binding positions include 625–633 and lysine 651; that span reads IGAGEFGEV. Aspartate 744 acts as the Proton acceptor in catalysis. Positions 911–975 constitute an SAM domain; the sequence is TAFTTVDDWL…LNSIHSMRVQ (65 aa). A Phosphotyrosine; by autocatalysis modification is found at tyrosine 928. The PDZ-binding signature appears at 982 to 984; that stretch reads AMA.

This sequence belongs to the protein kinase superfamily. Tyr protein kinase family. Ephrin receptor subfamily. In terms of assembly, heterotetramer upon binding of the ligand. The heterotetramer is composed of an ephrin dimer and a receptor dimer. Oligomerization is probably required to induce biological responses. Interacts with EPHB6; transphosphorylates EPHB6 to form an active signaling complex. Interacts with PICK1. Interacts (through Tyr-594) with NCK1 (via SH2 domain); activates the JUN cascade to regulate cell adhesion. The ligand-activated form interacts (through Tyr-928) with GRB7 and GRB10 (via SH2 domains). The ligand-activated form interacts (residues within the catalytic domain) with GRB2 (via SH2 domain). Interacts with GRB2, SHC1 and SRC; activates the MAPK/ERK cascade to regulate cell migration. Interacts with CBL; regulates receptor degradation through ubiquitination. Interacts with ACP1. Phosphorylated. Autophosphorylation is stimulated by the ligand EFNB1. Required for interaction with SH2 domain-containing interactors, for activation of the MAPK/ERK and JUN signaling cascades and for ubiquitination by CBL. In terms of processing, ubiquitinated; (EFNB1)ligand-induced poly- and/or multi-ubiquitination by CBL is regulated by SRC and leads to lysosomal degradation. In terms of tissue distribution, preferentially expressed in brain.

It localises to the cell membrane. The protein localises to the early endosome membrane. Its subcellular location is the cell projection. It is found in the dendrite. It catalyses the reaction L-tyrosyl-[protein] + ATP = O-phospho-L-tyrosyl-[protein] + ADP + H(+). In terms of biological role, receptor tyrosine kinase which binds promiscuously transmembrane ephrin-B family ligands residing on adjacent cells, leading to contact-dependent bidirectional signaling into neighboring cells. The signaling pathway downstream of the receptor is referred to as forward signaling while the signaling pathway downstream of the ephrin ligand is referred to as reverse signaling. Cognate/functional ephrin ligands for this receptor include EFNB1, EFNB2 and EFNB3. During nervous system development, regulates retinal axon guidance redirecting ipsilaterally ventrotemporal retinal ganglion cells axons at the optic chiasm midline. This probably requires repulsive interaction with EFNB2. In the adult nervous system together with EFNB3, regulates chemotaxis, proliferation and polarity of the hippocampus neural progenitors. In addition to its role in axon guidance also plays an important redundant role with other ephrin-B receptors in development and maturation of dendritic spines and synapse formation. May also regulate angiogenesis. More generally, may play a role in targeted cell migration and adhesion. Upon activation by EFNB1 and probably other ephrin-B ligands activates the MAPK/ERK and the JNK signaling cascades to regulate cell migration and adhesion respectively. Involved in the maintenance of the pool of satellite cells (muscle stem cells) by promoting their self-renewal and reducing their activation and differentiation. The sequence is that of Ephrin type-B receptor 1 (EPHB1) from Homo sapiens (Human).